The following is a 219-amino-acid chain: Ribose-5-phosphate isomerase A (219 aa).

Residues 28–31, 81–84, and 94–97 each bind substrate; these read SGST, DGAD, and KGGG. Glutamate 103 serves as the catalytic Proton acceptor. Residue lysine 121 participates in substrate binding.

The protein belongs to the ribose 5-phosphate isomerase family. Homodimer.

It carries out the reaction aldehydo-D-ribose 5-phosphate = D-ribulose 5-phosphate. It functions in the pathway carbohydrate degradation; pentose phosphate pathway; D-ribose 5-phosphate from D-ribulose 5-phosphate (non-oxidative stage): step 1/1. In terms of biological role, catalyzes the reversible conversion of ribose-5-phosphate to ribulose 5-phosphate. In Histophilus somni (strain 129Pt) (Haemophilus somnus), this protein is Ribose-5-phosphate isomerase A.